The chain runs to 258 residues: Imidazole glycerol phosphate synthase subunit HisF (258 aa).

Active-site residues include D11 and D130.

The protein belongs to the HisA/HisF family. As to quaternary structure, heterodimer of HisH and HisF.

It is found in the cytoplasm. It catalyses the reaction 5-[(5-phospho-1-deoxy-D-ribulos-1-ylimino)methylamino]-1-(5-phospho-beta-D-ribosyl)imidazole-4-carboxamide + L-glutamine = D-erythro-1-(imidazol-4-yl)glycerol 3-phosphate + 5-amino-1-(5-phospho-beta-D-ribosyl)imidazole-4-carboxamide + L-glutamate + H(+). It functions in the pathway amino-acid biosynthesis; L-histidine biosynthesis; L-histidine from 5-phospho-alpha-D-ribose 1-diphosphate: step 5/9. IGPS catalyzes the conversion of PRFAR and glutamine to IGP, AICAR and glutamate. The HisF subunit catalyzes the cyclization activity that produces IGP and AICAR from PRFAR using the ammonia provided by the HisH subunit. This is Imidazole glycerol phosphate synthase subunit HisF from Serratia proteamaculans (strain 568).